A 495-amino-acid chain; its full sequence is uncharacterized protein (495 aa).

Positions 1 to 17 are cleaved as a signal peptide; sequence MRTLSLLILFLSTFLFA.

This is an uncharacterized protein from Aquifex aeolicus (strain VF5).